The chain runs to 348 residues: tRNA N6-adenosine threonylcarbamoyltransferase (348 aa).

The Fe cation site is built by H114 and H118. Substrate-binding positions include 137-141, D171, G184, D188, and N283; that span reads LVSGG. D311 contacts Fe cation.

Belongs to the KAE1 / TsaD family. Requires Fe(2+) as cofactor.

The protein resides in the cytoplasm. It catalyses the reaction L-threonylcarbamoyladenylate + adenosine(37) in tRNA = N(6)-L-threonylcarbamoyladenosine(37) in tRNA + AMP + H(+). Its function is as follows. Required for the formation of a threonylcarbamoyl group on adenosine at position 37 (t(6)A37) in tRNAs that read codons beginning with adenine. Is involved in the transfer of the threonylcarbamoyl moiety of threonylcarbamoyl-AMP (TC-AMP) to the N6 group of A37, together with TsaE and TsaB. TsaD likely plays a direct catalytic role in this reaction. The chain is tRNA N6-adenosine threonylcarbamoyltransferase from Nocardioides sp. (strain ATCC BAA-499 / JS614).